Reading from the N-terminus, the 214-residue chain is 3-isopropylmalate dehydratase small subunit (214 aa).

It belongs to the LeuD family. LeuD type 1 subfamily. In terms of assembly, heterodimer of LeuC and LeuD.

It carries out the reaction (2R,3S)-3-isopropylmalate = (2S)-2-isopropylmalate. It functions in the pathway amino-acid biosynthesis; L-leucine biosynthesis; L-leucine from 3-methyl-2-oxobutanoate: step 2/4. Its function is as follows. Catalyzes the isomerization between 2-isopropylmalate and 3-isopropylmalate, via the formation of 2-isopropylmaleate. In Alcanivorax borkumensis (strain ATCC 700651 / DSM 11573 / NCIMB 13689 / SK2), this protein is 3-isopropylmalate dehydratase small subunit.